The following is a 245-amino-acid chain: Caffeoyl-CoA O-methyltransferase (245 aa).

Lys-19 is a binding site for substrate. Residues Thr-61, Glu-83, 85 to 86, Ser-91, Asp-109, and Ala-138 contribute to the S-adenosyl-L-methionine site; that span reads GV. Asp-161 contributes to the substrate binding site. Asp-161 provides a ligand contact to a divalent metal cation. Asp-163 is an S-adenosyl-L-methionine binding site. The a divalent metal cation site is built by Asp-187 and Asn-188. Substrate is bound at residue Asn-192.

Belongs to the class I-like SAM-binding methyltransferase superfamily. Cation-dependent O-methyltransferase family. CCoAMT subfamily. A divalent metal cation serves as cofactor.

It catalyses the reaction (E)-caffeoyl-CoA + S-adenosyl-L-methionine = (E)-feruloyl-CoA + S-adenosyl-L-homocysteine + H(+). It participates in aromatic compound metabolism; phenylpropanoid biosynthesis. Methylates caffeoyl-CoA to feruloyl-CoA and 5-hydroxyferuloyl-CoA to sinapoyl-CoA. Plays a role in the synthesis of feruloylated polysaccharides. Involved in the reinforcement of the plant cell wall. Also involved in the responding to wounding or pathogen challenge by the increased formation of cell wall-bound ferulic acid polymers. The protein is Caffeoyl-CoA O-methyltransferase (CCOAOMT) of Zinnia elegans (Garden zinnia).